A 360-amino-acid chain; its full sequence is DNA replication and repair protein RecF (360 aa).

33–40 (GENGSGKT) lines the ATP pocket.

The protein belongs to the RecF family.

It localises to the cytoplasm. Functionally, the RecF protein is involved in DNA metabolism; it is required for DNA replication and normal SOS inducibility. RecF binds preferentially to single-stranded, linear DNA. It also seems to bind ATP. The polypeptide is DNA replication and repair protein RecF (Rickettsia typhi (strain ATCC VR-144 / Wilmington)).